The following is a 102-amino-acid chain: Large ribosomal subunit protein uL24 (102 aa).

The segment at 44 to 65 (HAKPSQDNPQGGILNQEAPIHS) is disordered.

This sequence belongs to the universal ribosomal protein uL24 family. As to quaternary structure, part of the 50S ribosomal subunit.

Functionally, one of two assembly initiator proteins, it binds directly to the 5'-end of the 23S rRNA, where it nucleates assembly of the 50S subunit. In terms of biological role, one of the proteins that surrounds the polypeptide exit tunnel on the outside of the subunit. This is Large ribosomal subunit protein uL24 from Shouchella clausii (strain KSM-K16) (Alkalihalobacillus clausii).